We begin with the raw amino-acid sequence, 157 residues long: NADPH-dependent 7-cyano-7-deazaguanine reductase (157 aa).

Catalysis depends on C56, which acts as the Thioimide intermediate. D63 (proton donor) is an active-site residue. Substrate-binding positions include 78–80 (VES) and 97–98 (HE).

It belongs to the GTP cyclohydrolase I family. QueF type 1 subfamily.

The protein resides in the cytoplasm. It catalyses the reaction 7-aminomethyl-7-carbaguanine + 2 NADP(+) = 7-cyano-7-deazaguanine + 2 NADPH + 3 H(+). It participates in tRNA modification; tRNA-queuosine biosynthesis. Catalyzes the NADPH-dependent reduction of 7-cyano-7-deazaguanine (preQ0) to 7-aminomethyl-7-deazaguanine (preQ1). The chain is NADPH-dependent 7-cyano-7-deazaguanine reductase from Parabacteroides distasonis (strain ATCC 8503 / DSM 20701 / CIP 104284 / JCM 5825 / NCTC 11152).